The chain runs to 130 residues: Universal stress protein MSMEG_4207 (130 aa).

Lys104 carries the N6-acetyllysine modification.

It belongs to the universal stress protein A family. Post-translationally, acetylated on Lys-104 by PatA in the presence of acetyl-CoA as an acetyl donor.

The sequence is that of Universal stress protein MSMEG_4207 from Mycolicibacterium smegmatis (strain ATCC 700084 / mc(2)155) (Mycobacterium smegmatis).